We begin with the raw amino-acid sequence, 98 residues long: NADH-ubiquinone oxidoreductase chain 4L (98 aa).

Helical transmembrane passes span 1 to 21 (MTLVYMNMALAFTISLLGLLM), 29 to 49 (SLLCLEGMMLSLFVTMAVTIL), and 61 to 81 (IILLVFAACEAALGLSLLVMV).

This sequence belongs to the complex I subunit 4L family. Core subunit of respiratory chain NADH dehydrogenase (Complex I) which is composed of 45 different subunits.

It localises to the mitochondrion inner membrane. The catalysed reaction is a ubiquinone + NADH + 5 H(+)(in) = a ubiquinol + NAD(+) + 4 H(+)(out). Core subunit of the mitochondrial membrane respiratory chain NADH dehydrogenase (Complex I) which catalyzes electron transfer from NADH through the respiratory chain, using ubiquinone as an electron acceptor. Part of the enzyme membrane arm which is embedded in the lipid bilayer and involved in proton translocation. The protein is NADH-ubiquinone oxidoreductase chain 4L (MT-ND4L) of Rousettus aegyptiacus (Egyptian fruit bat).